Reading from the N-terminus, the 288-residue chain is Bifunctional protein FolD (288 aa).

NADP(+)-binding positions include 166–168 (GRS), Ser191, and Ile232.

It belongs to the tetrahydrofolate dehydrogenase/cyclohydrolase family. In terms of assembly, homodimer.

The catalysed reaction is (6R)-5,10-methylene-5,6,7,8-tetrahydrofolate + NADP(+) = (6R)-5,10-methenyltetrahydrofolate + NADPH. It catalyses the reaction (6R)-5,10-methenyltetrahydrofolate + H2O = (6R)-10-formyltetrahydrofolate + H(+). The protein operates within one-carbon metabolism; tetrahydrofolate interconversion. Functionally, catalyzes the oxidation of 5,10-methylenetetrahydrofolate to 5,10-methenyltetrahydrofolate and then the hydrolysis of 5,10-methenyltetrahydrofolate to 10-formyltetrahydrofolate. This is Bifunctional protein FolD from Rickettsia canadensis (strain McKiel).